Here is a 112-residue protein sequence, read N- to C-terminus: UPF0102 protein THEYE_A1950 (112 aa).

The protein belongs to the UPF0102 family.

This is UPF0102 protein THEYE_A1950 from Thermodesulfovibrio yellowstonii (strain ATCC 51303 / DSM 11347 / YP87).